The sequence spans 88 residues: Histone H2A-beta, sperm (88 aa).

The protein belongs to the histone H2A family. In terms of assembly, the nucleosome is a histone octamer containing two molecules each of H2A, H2B, H3 and H4 assembled in one H3-H4 heterotetramer and two H2A-H2B heterodimers. The octamer wraps approximately 147 bp of DNA. In terms of processing, monoubiquitination in C-terminus gives a specific tag for epigenetic transcriptional repression.

It localises to the nucleus. It is found in the chromosome. Core component of nucleosome. Nucleosomes wrap and compact DNA into chromatin, limiting DNA accessibility to the cellular machineries which require DNA as a template. Histones thereby play a central role in transcription regulation, DNA repair, DNA replication and chromosomal stability. DNA accessibility is regulated via a complex set of post-translational modifications of histones, also called histone code, and nucleosome remodeling. The sequence is that of Histone H2A-beta, sperm from Strongylocentrotus purpuratus (Purple sea urchin).